The following is a 250-amino-acid chain: Cobalt transport protein CbiM (250 aa).

The signal sequence occupies residues 1–26 (MNKKEKRIVAIAAAFALCFGISPAVN). The next 6 helical transmembrane spans lie at 38–58 (KYCI…YFSI), 68–88 (SITM…LKIP), 102–122 (LGAI…VLIF), 134–154 (TLGA…FGIY), 165–185 (LSGI…VTSI), and 209–229 (FAPT…VIMI).

The protein belongs to the CbiM family. As to quaternary structure, forms an energy-coupling factor (ECF) transporter complex composed of an ATP-binding protein (A component, CbiO), a transmembrane protein (T component, CbiQ) and 2 possible substrate-capture proteins (S components, CbiM and CbiN) of unknown stoichimetry.

The protein resides in the cell membrane. It functions in the pathway cofactor biosynthesis; adenosylcobalamin biosynthesis. Its function is as follows. Part of the energy-coupling factor (ECF) transporter complex CbiMNOQ involved in cobalt import. The sequence is that of Cobalt transport protein CbiM from Lachnoclostridium phytofermentans (strain ATCC 700394 / DSM 18823 / ISDg) (Clostridium phytofermentans).